Consider the following 442-residue polypeptide: 3-isopropylmalate dehydratase large subunit (442 aa).

Positions 347, 407, and 410 each coordinate [4Fe-4S] cluster.

It belongs to the aconitase/IPM isomerase family. LeuC type 1 subfamily. As to quaternary structure, heterodimer of LeuC and LeuD. [4Fe-4S] cluster serves as cofactor.

The enzyme catalyses (2R,3S)-3-isopropylmalate = (2S)-2-isopropylmalate. It functions in the pathway amino-acid biosynthesis; L-leucine biosynthesis; L-leucine from 3-methyl-2-oxobutanoate: step 2/4. Functionally, catalyzes the isomerization between 2-isopropylmalate and 3-isopropylmalate, via the formation of 2-isopropylmaleate. This is 3-isopropylmalate dehydratase large subunit from Buchnera aphidicola subsp. Macrosiphoniella ludovicianae.